The primary structure comprises 119 residues: Small ribosomal subunit protein uS17 (119 aa).

Positions 1–21 (MAEAKTGAKATKSAAAGAADG) are enriched in low complexity. The disordered stretch occupies residues 1 to 44 (MAEAKTGAKATKSAAAGAADGASKEKGPKHTPSTPKPRGRRKTR).

This sequence belongs to the universal ribosomal protein uS17 family. In terms of assembly, part of the 30S ribosomal subunit.

In terms of biological role, one of the primary rRNA binding proteins, it binds specifically to the 5'-end of 16S ribosomal RNA. The protein is Small ribosomal subunit protein uS17 of Mycobacterium marinum (strain ATCC BAA-535 / M).